Reading from the N-terminus, the 227-residue chain is ATP synthase F(0) complex subunit a (227 aa).

6 helical membrane passes run 12–32 (PCLLGIPLILPSLLLPALLLP), 69–89 (WALLLTSLILMLLSINLLGLL), 98–118 (QLSMNMALALPLWLATLLTGL), 139–159 (IPALIMIETTSLLIRPLALGV), 170–190 (LLIQLISTATIALLPMMPSIS), and 196–216 (ILFLLTILEVAVAMIQAYVFV).

Belongs to the ATPase A chain family. As to quaternary structure, component of the ATP synthase complex composed at least of ATP5F1A/subunit alpha, ATP5F1B/subunit beta, ATP5MC1/subunit c (homooctomer), MT-ATP6/subunit a, MT-ATP8/subunit 8, ATP5ME/subunit e, ATP5MF/subunit f, ATP5MG/subunit g, ATP5MK/subunit k, ATP5MJ/subunit j, ATP5F1C/subunit gamma, ATP5F1D/subunit delta, ATP5F1E/subunit epsilon, ATP5PF/subunit F6, ATP5PB/subunit b, ATP5PD/subunit d, ATP5PO/subunit OSCP. ATP synthase complex consists of a soluble F(1) head domain (subunits alpha(3) and beta(3)) - the catalytic core - and a membrane F(0) domain - the membrane proton channel (subunits c, a, 8, e, f, g, k and j). These two domains are linked by a central stalk (subunits gamma, delta, and epsilon) rotating inside the F1 region and a stationary peripheral stalk (subunits F6, b, d, and OSCP). Interacts with DNAJC30; interaction is direct.

It localises to the mitochondrion inner membrane. The enzyme catalyses H(+)(in) = H(+)(out). Its function is as follows. Subunit a, of the mitochondrial membrane ATP synthase complex (F(1)F(0) ATP synthase or Complex V) that produces ATP from ADP in the presence of a proton gradient across the membrane which is generated by electron transport complexes of the respiratory chain. ATP synthase complex consist of a soluble F(1) head domain - the catalytic core - and a membrane F(1) domain - the membrane proton channel. These two domains are linked by a central stalk rotating inside the F(1) region and a stationary peripheral stalk. During catalysis, ATP synthesis in the catalytic domain of F(1) is coupled via a rotary mechanism of the central stalk subunits to proton translocation. With the subunit c (ATP5MC1), forms the proton-conducting channel in the F(0) domain, that contains two crucial half-channels (inlet and outlet) that facilitate proton movement from the mitochondrial intermembrane space (IMS) into the matrix. Protons are taken up via the inlet half-channel and released through the outlet half-channel, following a Grotthuss mechanism. The chain is ATP synthase F(0) complex subunit a from Gallus gallus (Chicken).